Reading from the N-terminus, the 727-residue chain is Elongation factor 2 (727 aa).

The region spanning 19-260 (DQIRNMGICA…MAIKHLPNPL (242 aa)) is the tr-type G domain. GTP is bound by residues 28 to 35 (AHIDHGKT), 94 to 98 (DTPGH), and 148 to 151 (NKVD). His603 carries the post-translational modification Diphthamide.

Belongs to the TRAFAC class translation factor GTPase superfamily. Classic translation factor GTPase family. EF-G/EF-2 subfamily.

Its subcellular location is the cytoplasm. Its function is as follows. Catalyzes the GTP-dependent ribosomal translocation step during translation elongation. During this step, the ribosome changes from the pre-translocational (PRE) to the post-translocational (POST) state as the newly formed A-site-bound peptidyl-tRNA and P-site-bound deacylated tRNA move to the P and E sites, respectively. Catalyzes the coordinated movement of the two tRNA molecules, the mRNA and conformational changes in the ribosome. This is Elongation factor 2 from Methanococcus maripaludis (strain C7 / ATCC BAA-1331).